Here is a 612-residue protein sequence, read N- to C-terminus: Dihydroxy-acid dehydratase (612 aa).

Asp81 contacts Mg(2+). Cys122 is a binding site for [2Fe-2S] cluster. Mg(2+) is bound by residues Asp123 and Lys124. Residue Lys124 is modified to N6-carboxylysine. Cys195 contacts [2Fe-2S] cluster. Glu491 is a Mg(2+) binding site. Ser517 serves as the catalytic Proton acceptor.

It belongs to the IlvD/Edd family. Homodimer. Requires [2Fe-2S] cluster as cofactor. Mg(2+) is required as a cofactor.

The catalysed reaction is (2R)-2,3-dihydroxy-3-methylbutanoate = 3-methyl-2-oxobutanoate + H2O. It catalyses the reaction (2R,3R)-2,3-dihydroxy-3-methylpentanoate = (S)-3-methyl-2-oxopentanoate + H2O. It functions in the pathway amino-acid biosynthesis; L-isoleucine biosynthesis; L-isoleucine from 2-oxobutanoate: step 3/4. The protein operates within amino-acid biosynthesis; L-valine biosynthesis; L-valine from pyruvate: step 3/4. Its function is as follows. Functions in the biosynthesis of branched-chain amino acids. Catalyzes the dehydration of (2R,3R)-2,3-dihydroxy-3-methylpentanoate (2,3-dihydroxy-3-methylvalerate) into 2-oxo-3-methylpentanoate (2-oxo-3-methylvalerate) and of (2R)-2,3-dihydroxy-3-methylbutanoate (2,3-dihydroxyisovalerate) into 2-oxo-3-methylbutanoate (2-oxoisovalerate), the penultimate precursor to L-isoleucine and L-valine, respectively. This Haemophilus influenzae (strain PittEE) protein is Dihydroxy-acid dehydratase.